The sequence spans 271 residues: tRNA (guanine-N(7)-)-methyltransferase (271 aa).

Glu95, Glu120, Asp147, and Asp175 together coordinate S-adenosyl-L-methionine. The active site involves Asp175. Substrate contacts are provided by residues Lys179, Asp211, and 249 to 252; that span reads THFE.

It belongs to the class I-like SAM-binding methyltransferase superfamily. TrmB family.

It catalyses the reaction guanosine(46) in tRNA + S-adenosyl-L-methionine = N(7)-methylguanosine(46) in tRNA + S-adenosyl-L-homocysteine. The protein operates within tRNA modification; N(7)-methylguanine-tRNA biosynthesis. In terms of biological role, catalyzes the formation of N(7)-methylguanine at position 46 (m7G46) in tRNA. This Rhodopirellula baltica (strain DSM 10527 / NCIMB 13988 / SH1) protein is tRNA (guanine-N(7)-)-methyltransferase.